Consider the following 139-residue polypeptide: 3-hydroxyacyl-[acyl-carrier-protein] dehydratase FabZ (139 aa).

The active site involves His-46.

It belongs to the thioester dehydratase family. FabZ subfamily.

It localises to the cytoplasm. The catalysed reaction is a (3R)-hydroxyacyl-[ACP] = a (2E)-enoyl-[ACP] + H2O. Its function is as follows. Involved in unsaturated fatty acids biosynthesis. Catalyzes the dehydration of short chain beta-hydroxyacyl-ACPs and long chain saturated and unsaturated beta-hydroxyacyl-ACPs. This is 3-hydroxyacyl-[acyl-carrier-protein] dehydratase FabZ from Streptococcus pyogenes serotype M3 (strain ATCC BAA-595 / MGAS315).